The chain runs to 328 residues: POU domain, class 5, transcription factor 2 (328 aa).

The disordered stretch occupies residues 1 to 25 (MAGHRPSNHFCPLPGSGGGGPRGPM). Residues 118–192 (DISGILKELQ…LLKKWLKEVE (75 aa)) form the POU-specific domain. Residues 210 to 269 (GKWRRASRERRIGNSLEKFFQRCPKPTPQQISHIAGCLQLQKDVVRVWFYNRSKMGSRPT) constitute a DNA-binding region (homeobox).

The protein belongs to the POU transcription factor family. Class-5 subfamily. Expressed in skeletal and cardiac muscles, brain, heart and lung. Little or no detectable expression found in pancreas, kidney, liver or placenta.

The protein localises to the nucleus. In terms of biological role, transcription factor that binds preferentially to the octamer motif (5'-ATGTTAAT-3'). May exert a regulatory function in meiotic events that are required for terminal differentiation of male germ cell. The sequence is that of POU domain, class 5, transcription factor 2 (POU5F2) from Homo sapiens (Human).